Here is a 469-residue protein sequence, read N- to C-terminus: Light-independent protochlorophyllide reductase subunit N (469 aa).

[4Fe-4S] cluster contacts are provided by cysteine 24, cysteine 49, and cysteine 109.

It belongs to the BchN/ChlN family. In terms of assembly, protochlorophyllide reductase is composed of three subunits; ChlL, ChlN and ChlB. Forms a heterotetramer of two ChlB and two ChlN subunits. [4Fe-4S] cluster serves as cofactor.

The enzyme catalyses chlorophyllide a + oxidized 2[4Fe-4S]-[ferredoxin] + 2 ADP + 2 phosphate = protochlorophyllide a + reduced 2[4Fe-4S]-[ferredoxin] + 2 ATP + 2 H2O. The protein operates within porphyrin-containing compound metabolism; chlorophyll biosynthesis (light-independent). In terms of biological role, component of the dark-operative protochlorophyllide reductase (DPOR) that uses Mg-ATP and reduced ferredoxin to reduce ring D of protochlorophyllide (Pchlide) to form chlorophyllide a (Chlide). This reaction is light-independent. The NB-protein (ChlN-ChlB) is the catalytic component of the complex. The sequence is that of Light-independent protochlorophyllide reductase subunit N from Gloeobacter violaceus (strain ATCC 29082 / PCC 7421).